A 1167-amino-acid polypeptide reads, in one-letter code: MEPENYLAWLARDIVRNLSYTSLVYNNPKVAIVELLDNKEAFFAYEKEQKTPEALINYIDSIVKSSISVEDKIEALLKIRYISVYVDDKSDKRDIVLQLLNRTIKKIELKTKISDELNDAINAITIESKNWKIQNSKSFKPYHYNQLVSDFIKYNEFEVLEGTDPLKWKSDTLQGLSPNYNHRTHTLISSIIYATSVRFDNYNDEQLQVLLYLFSVIRTNYVNGYLEILPNRKWSHSLADLRENKSIMMYSAKIIHASCAMISILHAVPIDYFFLAQIIASFSEIPAHAAKHLSSPMTLYIGIAQLRSNIVVSTKIAAESVATESPNISRLEESQIREWEQEMSEYPFQSSRMVRMMKKNIFDVSVDMFYAIFNCFSATFHVGHRIDNPQDAIEAQVKVEYTSDVDKEMYDQYYFLLKRMLTDQLAEYAEEMYFKYNSDVTAESLAAMANSSNGYSRSVTFLDREIKTTKKMLHLDDDLSKNLNFTNIGDQIKKGIPMGTRNVPARQTRGIFILSWQVAAIQHTIAEFLYKKAKKGGFGATFAEAYVAKAATLTYGILAEATSKADQLILYTDVSQWDASQHNTEPYRSAWINAIKEARTKYKINYNQEPVVLGMNVLDKMIEIQEALLNSNLIVESQGSKRQPLRIKYHGVASGEKTTKIGNSFANVALITTVFNNLTNTMPSIRVNHMRVDGDDNVVTMYTANRIDEVQENIKEKYKRMNAKVKALASYTGLEMAKRFIICGKIFERGAISIFTAERPYGTDLSVQSTTGSLIYSAAVNAYRGFGDNYLNFMTDVLVPPSASVKITGRLRSLLSPVTLYSTGPLSFEITPYGLGGRMRLFSLSKENMELYKILTSSLAISVQPDEIKKYSSTPQFKARVDRMISSVQIAMKSEAKIITSILRDKEEQKTLGVPNVATTKNRQQIEKARKTLSLPKETLPKVTKYYPEEIFHLILRNSTFTIPKLNTMTKVYMNNSANITKLQQQLGVRVSSGIQVHRPVNTLLKLVEKHSPIKISPSDLVLYSKKYDLTNLNGKKQFLIDLGISGNELRFYLNSKLLFHDLLLSKYDKLYESPGFGATQLNALPLDLTAAEKVFSIKLNLPNTYYELLMLILLYEYVNFVMFTGDTFRAVCIPESQTINAKLVKTVMTMIDNIQLDTVMFSDNIY.

Residues 553–735 enclose the RdRp catalytic domain; sequence LTYGILAEAT…KALASYTGLE (183 aa).

The protein belongs to the reoviridae RNA-directed RNA polymerase family. In terms of assembly, interacts with VP3 (Potential). Interacts with VP2 (Potential). Interacts with NSP5; this interaction is probably necessary for the formation of functional virus factories.

The protein localises to the virion. The enzyme catalyses RNA(n) + a ribonucleoside 5'-triphosphate = RNA(n+1) + diphosphate. Functionally, RNA-directed RNA polymerase that is involved in both transcription and genome replication. Together with VP3 capping enzyme, forms an enzyme complex positioned near the channels situated at each of the five-fold vertices of the core. Following infection, the outermost layer of the virus is lost, leaving a double-layered particle (DLP) made up of the core and VP6 shell. VP1 then catalyzes the transcription of fully conservative plus-strand genomic RNAs that are extruded through the DLP's channels into the cytoplasm where they function as mRNAs for translation of viral proteins. One copy of each of the viral (+)RNAs is also recruited during core assembly, together with newly synthesized polymerase complexes and VP2. The polymerase of these novo-formed particles catalyzes the synthesis of complementary minus-strands leading to dsDNA formation. To do so, the polymerase specifically recognizes conserved 3' sequence(s) in plus-strand RNA templates. Once dsRNA synthesis is complete, the polymerase switches to the transcriptional mode, thus providing secondary transcription. This Rotavirus X (strain RVX/Human/China/NADRV-J19/1997/GXP[X]) (RV ADRV-N) protein is RNA-directed RNA polymerase.